The primary structure comprises 783 residues: Protein DWD HYPERSENSITIVE TO UV-B 1 (783 aa).

2 WD repeats span residues 145–198 (GEFT…LKLP) and 212–256 (SDSS…DPSL). Residues 382–389 (RKKESVVR) carry the Nuclear localization signal motif. 6 WD repeats span residues 439–480 (DNSR…IFRY), 485–525 (GSQS…STVT), 538–577 (DEFD…RLQV), 581–621 (MHQE…SRPC), 625–664 (SSTK…LHLN), and 666–710 (EIVP…RRLR).

Interacts directly with DDB1A. Binds to COP1 and RUP1.

Its subcellular location is the nucleus. Its function is as follows. May act as a substrate receptor of a CUL4-RING E3 ubiquitin-protein ligase (CRL4) complex involved in the negative regulation of cellular responses to ultraviolet-B (UV-B) illumination, likely in coordination with RUP1. Interacts with COP1 and probably prevents the formation of active UVR8-COP1 complex, thus avoiding UVR8-COP1-mediated positive regulation of UV-B responses. This chain is Protein DWD HYPERSENSITIVE TO UV-B 1, found in Arabidopsis thaliana (Mouse-ear cress).